We begin with the raw amino-acid sequence, 466 residues long: MEEAEGVAAAPGPASGLAFRGRRAMSGSWERDQQVEAAQRTLVEVLGPYEPLLSRVQAALVWERPARSALWCLGLNAAFWFFALTSLRFVFLLAFSLMIIVCIDQWKNKIWPEINVPRPDALDNESWGFVHPRLLSVPELCHHVAEVWVSGTIFIRNLLLFKKQNPGKFCLLSCGVLTFLAMLGRYIPGLLLSYLMLVIIMMWPLAVYHRLWDRAYVRLKPVLQRLDFSVRGYMMSKQRERQLRRRALHSERATDSHSDSEEELAAFCPQLDDSTVARELAITDSEHSDAEVSCTENGTFNLSRGQTPLTEGSEDLDGHSDPEESFARDLPDFPSINVDPAGLDDEDDTSIGMPSLMYRSPPGAGDTQVLPASRNEAALPELLLSSLPGGSNLTSNLASLVSQGMIQLALSEASQTDPSGPPPRRATRGFLRAPSSDLDTDAEGDDFELLDQSELNQLDPASSRSH.

Residues 1–80 (MEEAEGVAAA…WCLGLNAAFW (80 aa)) are Cytoplasmic-facing. Position 26 is a phosphoserine (serine 26). A helical membrane pass occupies residues 81–101 (FFALTSLRFVFLLAFSLMIIV). At 102-168 (CIDQWKNKIW…LLFKKQNPGK (67 aa)) the chain is on the lumenal side. The chain crosses the membrane as a helical span at residues 169–187 (FCLLSCGVLTFLAMLGRYI). Topologically, residues 188–192 (PGLLL) are cytoplasmic. The chain crosses the membrane as a helical span at residues 193–211 (SYLMLVIIMMWPLAVYHRL). The Lumenal portion of the chain corresponds to 212–381 (WDRAYVRLKP…ASRNEAALPE (170 aa)). A disordered region spans residues 244-263 (RRRALHSERATDSHSDSEEE). Over residues 248–259 (LHSERATDSHSD) the composition is skewed to basic and acidic residues. A Phosphothreonine modification is found at threonine 254. Phosphoserine is present on residues serine 258 and serine 260. Threonine 283 carries the phosphothreonine modification. Phosphoserine occurs at positions 285, 288, 293, and 303. Positions 285–335 (SEHSDAEVSCTENGTFNLSRGQTPLTEGSEDLDGHSDPEESFARDLPDFPS) are disordered. Positions 294-310 (CTENGTFNLSRGQTPLT) are enriched in polar residues. A phosphothreonine mark is found at threonine 307 and threonine 310. Phosphoserine is present on residues serine 313, serine 320, and serine 360. A compositionally biased stretch (basic and acidic residues) spans 316–331 (LDGHSDPEESFARDLP). A helical membrane pass occupies residues 382 to 401 (LLLSSLPGGSNLTSNLASLV). At 402-466 (SQGMIQLALS…QLDPASSRSH (65 aa)) the chain is on the cytoplasmic side. A disordered region spans residues 412–444 (EASQTDPSGPPPRRATRGFLRAPSSDLDTDAEG). Threonine 440 bears the Phosphothreonine mark. The LIR motif signature appears at 445 to 450 (DDFELL).

It belongs to the RETREG family. Interacts with ATG8 family modifier proteins MAP1LC3A, MAP1LC3B, GABARAPL1 and GABARAPL2. Also interacts with ATG8 family modifier protein GABARAP. Interacts with CANX. Interacts with RTN4 isoform B. As to expression, widely expressed with highest levels in brain, lung, liver, muscle and spleen (protein level). Mainly expressed in the central nervous system and in parenchymatous organs including liver, lung and kidney.

It is found in the endoplasmic reticulum membrane. Its function is as follows. Endoplasmic reticulum (ER)-anchored autophagy regulator which exists in an inactive state under basal conditions but is activated following cellular stress. When activated, induces ER fragmentation and mediates ER delivery into lysosomes through sequestration into autophagosomes via interaction with ATG8 family proteins. Promotes ER membrane curvature and ER tubulation required for subsequent ER fragmentation and engulfment into autophagosomes. Required for collagen quality control in a LIR motif-dependent manner. Mediates NRF1-enhanced neurite outgrowth. This chain is Reticulophagy regulator 3 (Retreg3), found in Mus musculus (Mouse).